Here is a 215-residue protein sequence, read N- to C-terminus: NAD(P)H-quinone oxidoreductase subunit I (215 aa).

4Fe-4S ferredoxin-type domains lie at 55–84 (GRIH…VDWV) and 95–124 (RNYS…MTEE). [4Fe-4S] cluster contacts are provided by Cys64, Cys67, Cys70, Cys74, Cys104, Cys107, Cys110, and Cys114. The interval 166–215 (AGEMDPHGVPNDRPRAGQLPSQVLETLAPPAKVGAKNEGQSTGTTQEGEA) is disordered. A compositionally biased stretch (basic and acidic residues) spans 169–180 (MDPHGVPNDRPR). Over residues 203–215 (EGQSTGTTQEGEA) the composition is skewed to polar residues.

This sequence belongs to the complex I 23 kDa subunit family. NDH-1 is composed of at least 11 different subunits. [4Fe-4S] cluster serves as cofactor.

The protein resides in the cellular thylakoid membrane. The catalysed reaction is a plastoquinone + NADH + (n+1) H(+)(in) = a plastoquinol + NAD(+) + n H(+)(out). It catalyses the reaction a plastoquinone + NADPH + (n+1) H(+)(in) = a plastoquinol + NADP(+) + n H(+)(out). Its function is as follows. NDH-1 shuttles electrons from an unknown electron donor, via FMN and iron-sulfur (Fe-S) centers, to quinones in the respiratory and/or the photosynthetic chain. The immediate electron acceptor for the enzyme in this species is believed to be plastoquinone. Couples the redox reaction to proton translocation, and thus conserves the redox energy in a proton gradient. The protein is NAD(P)H-quinone oxidoreductase subunit I of Parasynechococcus marenigrum (strain WH8102).